The chain runs to 315 residues: Acetyl-coenzyme A carboxylase carboxyl transferase subunit alpha (315 aa).

Residues 39-293 enclose the CoA carboxyltransferase C-terminal domain; the sequence is RLQDKSSTLT…RADLIEQLDM (255 aa).

Belongs to the AccA family. In terms of assembly, acetyl-CoA carboxylase is a heterohexamer composed of biotin carboxyl carrier protein (AccB), biotin carboxylase (AccC) and two subunits each of ACCase subunit alpha (AccA) and ACCase subunit beta (AccD).

It localises to the cytoplasm. The enzyme catalyses N(6)-carboxybiotinyl-L-lysyl-[protein] + acetyl-CoA = N(6)-biotinyl-L-lysyl-[protein] + malonyl-CoA. It functions in the pathway lipid metabolism; malonyl-CoA biosynthesis; malonyl-CoA from acetyl-CoA: step 1/1. Its function is as follows. Component of the acetyl coenzyme A carboxylase (ACC) complex. First, biotin carboxylase catalyzes the carboxylation of biotin on its carrier protein (BCCP) and then the CO(2) group is transferred by the carboxyltransferase to acetyl-CoA to form malonyl-CoA. The polypeptide is Acetyl-coenzyme A carboxylase carboxyl transferase subunit alpha (Pseudomonas entomophila (strain L48)).